Here is an 86-residue protein sequence, read N- to C-terminus: Small ribosomal subunit protein bS20 (86 aa).

Belongs to the bacterial ribosomal protein bS20 family.

Its function is as follows. Binds directly to 16S ribosomal RNA. The chain is Small ribosomal subunit protein bS20 from Rhodococcus jostii (strain RHA1).